The primary structure comprises 315 residues: Methionyl-tRNA formyltransferase (315 aa).

113–116 contacts (6S)-5,6,7,8-tetrahydrofolate; sequence SLLP.

It belongs to the Fmt family.

The catalysed reaction is L-methionyl-tRNA(fMet) + (6R)-10-formyltetrahydrofolate = N-formyl-L-methionyl-tRNA(fMet) + (6S)-5,6,7,8-tetrahydrofolate + H(+). Functionally, attaches a formyl group to the free amino group of methionyl-tRNA(fMet). The formyl group appears to play a dual role in the initiator identity of N-formylmethionyl-tRNA by promoting its recognition by IF2 and preventing the misappropriation of this tRNA by the elongation apparatus. The chain is Methionyl-tRNA formyltransferase from Edwardsiella ictaluri (strain 93-146).